The sequence spans 430 residues: Adenylosuccinate synthetase (430 aa).

GTP contacts are provided by residues Gly-12–Lys-18 and Gly-40–Thr-42. Catalysis depends on Asp-13, which acts as the Proton acceptor. 2 residues coordinate Mg(2+): Asp-13 and Gly-40. IMP contacts are provided by residues Asp-13–Lys-16, Asn-38–His-41, Thr-130, Arg-144, Gln-224, Thr-239, and Arg-303. The Proton donor role is filled by His-41. Thr-299–Arg-305 contributes to the substrate binding site. GTP contacts are provided by residues Arg-305, Lys-331–Asp-333, and Ser-413–Ser-415.

Belongs to the adenylosuccinate synthetase family. As to quaternary structure, homodimer. The cofactor is Mg(2+).

It is found in the cytoplasm. The enzyme catalyses IMP + L-aspartate + GTP = N(6)-(1,2-dicarboxyethyl)-AMP + GDP + phosphate + 2 H(+). Its pathway is purine metabolism; AMP biosynthesis via de novo pathway; AMP from IMP: step 1/2. Plays an important role in the de novo pathway of purine nucleotide biosynthesis. Catalyzes the first committed step in the biosynthesis of AMP from IMP. The protein is Adenylosuccinate synthetase of Cereibacter sphaeroides (strain ATCC 17023 / DSM 158 / JCM 6121 / CCUG 31486 / LMG 2827 / NBRC 12203 / NCIMB 8253 / ATH 2.4.1.) (Rhodobacter sphaeroides).